The sequence spans 267 residues: MTRVNIGIVGCLGKQGRRLVSEISASPYAQVSGGLVRSGNPHVGQILGEVVGCDCSVKITDSLEHLFETSDIVIEFTNPDMLLECIKMAEQKKKPLLSGTTGPAATEMVFEDYIKSIPFLWTTNVSFGVNILAKLVQEAAKKLFDYDIEIWEMHHRYKKDSPSGTSLILGKAAAKGRNVPFQMAQYVRGTPQEARKDVNTIGYSVSRGGADLSDHRVMFVSDEEMIDFNHRTLNKNLYAKGALKAALWLVKQPPGVYTMSDMMAAVE.

Residue glycine 10–glutamine 15 participates in NAD(+) binding. Residue arginine 37 participates in NADP(+) binding. Residues glycine 99–threonine 101 and threonine 122–valine 125 each bind NAD(+). Histidine 154 acts as the Proton donor/acceptor in catalysis. Histidine 155 serves as a coordination point for (S)-2,3,4,5-tetrahydrodipicolinate. Residue lysine 158 is the Proton donor of the active site. Glycine 164–threonine 165 contacts (S)-2,3,4,5-tetrahydrodipicolinate.

It belongs to the DapB family.

The protein localises to the cytoplasm. The catalysed reaction is (S)-2,3,4,5-tetrahydrodipicolinate + NAD(+) + H2O = (2S,4S)-4-hydroxy-2,3,4,5-tetrahydrodipicolinate + NADH + H(+). The enzyme catalyses (S)-2,3,4,5-tetrahydrodipicolinate + NADP(+) + H2O = (2S,4S)-4-hydroxy-2,3,4,5-tetrahydrodipicolinate + NADPH + H(+). It functions in the pathway amino-acid biosynthesis; L-lysine biosynthesis via DAP pathway; (S)-tetrahydrodipicolinate from L-aspartate: step 4/4. In terms of biological role, catalyzes the conversion of 4-hydroxy-tetrahydrodipicolinate (HTPA) to tetrahydrodipicolinate. This is 4-hydroxy-tetrahydrodipicolinate reductase from Ehrlichia chaffeensis (strain ATCC CRL-10679 / Arkansas).